The following is a 956-amino-acid chain: UvrABC system protein A (956 aa).

Gly33–Ser40 contributes to the ATP binding site. A C4-type zinc finger spans residues Cys252–Cys279. ABC transporter domains lie at Trp309–Ile587 and Gly607–Lys936. Gly639–Ser646 provides a ligand contact to ATP. A C4-type zinc finger spans residues Cys738–Cys764.

This sequence belongs to the ABC transporter superfamily. UvrA family. Forms a heterotetramer with UvrB during the search for lesions.

Its subcellular location is the cytoplasm. Functionally, the UvrABC repair system catalyzes the recognition and processing of DNA lesions. UvrA is an ATPase and a DNA-binding protein. A damage recognition complex composed of 2 UvrA and 2 UvrB subunits scans DNA for abnormalities. When the presence of a lesion has been verified by UvrB, the UvrA molecules dissociate. The protein is UvrABC system protein A of Listeria monocytogenes serotype 4b (strain F2365).